Reading from the N-terminus, the 204-residue chain is 3-isopropylmalate dehydratase small subunit (204 aa).

The protein belongs to the LeuD family. LeuD type 1 subfamily. Heterodimer of LeuC and LeuD.

The catalysed reaction is (2R,3S)-3-isopropylmalate = (2S)-2-isopropylmalate. It functions in the pathway amino-acid biosynthesis; L-leucine biosynthesis; L-leucine from 3-methyl-2-oxobutanoate: step 2/4. Its function is as follows. Catalyzes the isomerization between 2-isopropylmalate and 3-isopropylmalate, via the formation of 2-isopropylmaleate. This chain is 3-isopropylmalate dehydratase small subunit, found in Psychromonas ingrahamii (strain DSM 17664 / CCUG 51855 / 37).